A 329-amino-acid polypeptide reads, in one-letter code: Delta(7)-sterol 5(6)-desaturase erg32 (329 aa).

A run of 2 helical transmembrane segments spans residues 67-87 (LFLI…SFAY) and 149-169 (FYLF…IYWI). The Fatty acid hydroxylase domain maps to 156-281 (ALFLLFSDFL…FFTLFDRLCS (126 aa)). Positions 170-175 (HRALHH) match the Histidine box-1 motif. The Histidine box-2 signature appears at 183–187 (HKLHH). The helical transmembrane segment at 210–230 (LPYHMFPFFFPLNKYVYLLLF) threads the bilayer. Residues 257-262 (HHAAHH) carry the Histidine box-3 motif.

It belongs to the sterol desaturase family. It depends on Fe cation as a cofactor.

It localises to the endoplasmic reticulum membrane. The protein localises to the golgi apparatus membrane. The enzyme catalyses episterol + 2 Fe(II)-[cytochrome b5] + O2 + 2 H(+) = 5-dehydroepisterol + 2 Fe(III)-[cytochrome b5] + 2 H2O. The protein operates within steroid metabolism; ergosterol biosynthesis. C-5 sterol desaturase; part of the third module of ergosterol biosynthesis pathway that includes by the late steps of the pathway. Erg31 and erg32 catalyze the introduction of a C-5 double bond in the B ring to produce 5-dehydroepisterol. The third module or late pathway involves the ergosterol synthesis itself through consecutive reactions that mainly occur in the endoplasmic reticulum (ER) membrane. Firstly, the squalene synthase erg9 catalyzes the condensation of 2 farnesyl pyrophosphate moieties to form squalene, which is the precursor of all steroids. Secondly, squalene is converted into lanosterol by the consecutive action of the squalene epoxidase erg1 and the lanosterol synthase erg7. The lanosterol 14-alpha-demethylase erg11/cyp1 catalyzes C14-demethylation of lanosterol to produce 4,4'-dimethyl cholesta-8,14,24-triene-3-beta-ol. In the next steps, a complex process involving various demethylation, reduction and desaturation reactions catalyzed by the C-14 reductase erg24 and the C-4 demethylation complex erg25-erg26-erg27 leads to the production of zymosterol. Erg28 likely functions in the C-4 demethylation complex reaction by tethering erg26 and Erg27 to the endoplasmic reticulum or to facilitate interaction between these proteins. Then, the sterol 24-C-methyltransferase erg6 catalyzes the methyl transfer from S-adenosyl-methionine to the C-24 of zymosterol to form fecosterol. The C-8 sterol isomerase erg2 catalyzes the reaction which results in unsaturation at C-7 in the B ring of sterols and thus converts fecosterol to episterol. The sterol-C5-desaturases erg31 and erg32 then catalyze the introduction of a C-5 double bond in the B ring to produce 5-dehydroepisterol. The C-22 sterol desaturase erg5 further converts 5-dehydroepisterol into ergosta-5,7,22,24(28)-tetraen-3beta-ol by forming the C-22(23) double bond in the sterol side chain. Finally, ergosta-5,7,22,24(28)-tetraen-3beta-ol is substrate of the C-24(28) sterol reductase erg4 to produce ergosterol. In the genus Schizosaccharomyces, a second route exists between lanosterol and fecosterol, via the methylation of lanosterol to eburicol by erg6, followed by C14-demethylation by erg11/cyp1 and C4-demethylation by the demethylation complex erg25-erg26-erg27. This chain is Delta(7)-sterol 5(6)-desaturase erg32, found in Schizosaccharomyces pombe (strain 972 / ATCC 24843) (Fission yeast).